Consider the following 259-residue polypeptide: Imidazole glycerol phosphate synthase subunit HisF (259 aa).

Catalysis depends on residues aspartate 11 and aspartate 130.

This sequence belongs to the HisA/HisF family. In terms of assembly, heterodimer of HisH and HisF.

It is found in the cytoplasm. The catalysed reaction is 5-[(5-phospho-1-deoxy-D-ribulos-1-ylimino)methylamino]-1-(5-phospho-beta-D-ribosyl)imidazole-4-carboxamide + L-glutamine = D-erythro-1-(imidazol-4-yl)glycerol 3-phosphate + 5-amino-1-(5-phospho-beta-D-ribosyl)imidazole-4-carboxamide + L-glutamate + H(+). It functions in the pathway amino-acid biosynthesis; L-histidine biosynthesis; L-histidine from 5-phospho-alpha-D-ribose 1-diphosphate: step 5/9. Its function is as follows. IGPS catalyzes the conversion of PRFAR and glutamine to IGP, AICAR and glutamate. The HisF subunit catalyzes the cyclization activity that produces IGP and AICAR from PRFAR using the ammonia provided by the HisH subunit. This Acidovorax ebreus (strain TPSY) (Diaphorobacter sp. (strain TPSY)) protein is Imidazole glycerol phosphate synthase subunit HisF.